A 321-amino-acid chain; its full sequence is Cytochrome c biogenesis protein CcsA (321 aa).

8 helical membrane passes run 9-29 (ILTH…LMTL), 44-64 (GLIA…IYSG), 71-91 (LYES…VPYF), 97-117 (LLST…TSGL), 143-163 (MILS…LLVI), 227-247 (VISL…VWAN), 261-275 (TWAF…IYLH), and 288-308 (AIVA…VNLL).

Belongs to the CcmF/CycK/Ccl1/NrfE/CcsA family. In terms of assembly, may interact with Ccs1.

The protein localises to the plastid. It localises to the chloroplast thylakoid membrane. Its function is as follows. Required during biogenesis of c-type cytochromes (cytochrome c6 and cytochrome f) at the step of heme attachment. In Nandina domestica (Heavenly bamboo), this protein is Cytochrome c biogenesis protein CcsA.